We begin with the raw amino-acid sequence, 260 residues long: Flap endonuclease Xni (260 aa).

Residue aspartate 104 coordinates Mg(2+). In terms of domain architecture, 5'-3' exonuclease spans 160–249 (VSPQQLTDYW…LNGNLQQLRL (90 aa)). Residues leucine 171, alanine 172, proline 180, valine 182, and isoleucine 185 each coordinate K(+). Positions 184–189 (GIGPKS) are interaction with DNA.

Belongs to the Xni family. Requires Mg(2+) as cofactor. It depends on K(+) as a cofactor.

Its function is as follows. Has flap endonuclease activity. During DNA replication, flap endonucleases cleave the 5'-overhanging flap structure that is generated by displacement synthesis when DNA polymerase encounters the 5'-end of a downstream Okazaki fragment. This chain is Flap endonuclease Xni, found in Pectobacterium carotovorum subsp. carotovorum (strain PC1).